The following is a 313-amino-acid chain: Small ribosomal subunit protein uS2 (313 aa).

Residue S2 is modified to N-acetylserine. Laminin-binding stretches follow at residues 161 to 180 (IPCN…MLAR) and 205 to 229 (RDPE…EFQG). [DE]-W-[ST] repeat units lie at residues 230–232 (EWS) and 245–247 (DWS). Positions 242–313 (EVADWSEGVA…DWGGTTSDWS (72 aa)) are laminin-binding. The segment covering 262 to 274 (PATAAAAAAAAPP) has biased composition (low complexity). Positions 262–313 (PATAAAAAAAAPPVKTGEVFSEDWSTQPATDDWSTAPTAQASDWGGTTSDWS) are disordered. [DE]-W-[ST] repeat units follow at residues 284 to 286 (DWS), 293 to 295 (DWS), and 311 to 313 (DWS). The span at 284–313 (DWSTQPATDDWSTAPTAQASDWGGTTSDWS) shows a compositional bias: polar residues.

It belongs to the universal ribosomal protein uS2 family. In terms of assembly, monomer (37LRP) and homodimer (67LR). Component of the small ribosomal subunit. Mature ribosomes consist of a small (40S) and a large (60S) subunit. The 40S subunit contains about 33 different proteins and 1 molecule of RNA (18S). The 60S subunit contains about 49 different proteins and 3 molecules of RNA (28S, 5.8S and 5S). Interacts with rps21. Interacts with several laminins including at least lamb1. Interacts with mdk. In terms of processing, acylated. Acylation may be a prerequisite for conversion of the monomeric 37 kDa laminin receptor precursor (37LRP) to the mature dimeric 67 kDa laminin receptor (67LR), and may provide a mechanism for membrane association. Cleaved by stromelysin-3 (ST3) at the cell surface. Cleavage by stromelysin-3 may be a mechanism to alter cell-extracellular matrix interactions.

It is found in the cell membrane. The protein resides in the cytoplasm. The protein localises to the nucleus. Its function is as follows. Required for the assembly and/or stability of the 40S ribosomal subunit. Required for the processing of the 20S rRNA-precursor to mature 18S rRNA in a late step of the maturation of 40S ribosomal subunits. Also functions as a cell surface receptor for laminin. Plays a role in cell adhesion to the basement membrane and in the consequent activation of signaling transduction pathways. May play a role in cell fate determination and tissue morphogenesis. In Solea senegalensis (Senegalese sole), this protein is Small ribosomal subunit protein uS2 (rpsa).